The chain runs to 218 residues: MNQLSLLAEFGEPITRVENALAALREGRGVLLLDDEDRENEGDIIYSVEHLTTAQMALMIRECSGIVCLCLTDEHANKLQLPPMVINNNSANQTAFTISIEAKHGVTTGVSAQDRVTTIKTAANRDAKASDLAHPGHVFPLRARAGGVMSRRGHTEGTVDLMQMAGLMPAGVLCELANEDGSMAKTPEIIAFGLKHNMPVLTIEDMVMYRNQYDLKLA.

Residues 38–39 (RE), aspartate 43, 151–155 (RRGHT), and glutamate 175 each bind D-ribulose 5-phosphate. Residue glutamate 39 participates in Mg(2+) binding. Mg(2+) is bound at residue histidine 154.

Belongs to the DHBP synthase family. As to quaternary structure, homodimer. Requires Mg(2+) as cofactor. It depends on Mn(2+) as a cofactor.

The catalysed reaction is D-ribulose 5-phosphate = (2S)-2-hydroxy-3-oxobutyl phosphate + formate + H(+). It functions in the pathway cofactor biosynthesis; riboflavin biosynthesis; 2-hydroxy-3-oxobutyl phosphate from D-ribulose 5-phosphate: step 1/1. Catalyzes the conversion of D-ribulose 5-phosphate to formate and 3,4-dihydroxy-2-butanone 4-phosphate. This chain is 3,4-dihydroxy-2-butanone 4-phosphate synthase, found in Shewanella frigidimarina (strain NCIMB 400).